The following is a 623-amino-acid chain: UvrABC system protein C (623 aa).

The 79-residue stretch at 27–105 (GSPGVYRMLD…IKQLKPRYNV (79 aa)) folds into the GIY-YIG domain. Residues 215 to 250 (TKVQANLAEQMQAASEAMEFERAAALRDRIKALTQV) form the UVR domain.

Belongs to the UvrC family. As to quaternary structure, interacts with UvrB in an incision complex.

The protein localises to the cytoplasm. In terms of biological role, the UvrABC repair system catalyzes the recognition and processing of DNA lesions. UvrC both incises the 5' and 3' sides of the lesion. The N-terminal half is responsible for the 3' incision and the C-terminal half is responsible for the 5' incision. The polypeptide is UvrABC system protein C (Cereibacter sphaeroides (strain ATCC 17023 / DSM 158 / JCM 6121 / CCUG 31486 / LMG 2827 / NBRC 12203 / NCIMB 8253 / ATH 2.4.1.) (Rhodobacter sphaeroides)).